The chain runs to 172 residues: Large ribosomal subunit protein uL10 (172 aa).

This sequence belongs to the universal ribosomal protein uL10 family. As to quaternary structure, part of the ribosomal stalk of the 50S ribosomal subunit. The N-terminus interacts with L11 and the large rRNA to form the base of the stalk. The C-terminus forms an elongated spine to which L12 dimers bind in a sequential fashion forming a multimeric L10(L12)X complex.

Its function is as follows. Forms part of the ribosomal stalk, playing a central role in the interaction of the ribosome with GTP-bound translation factors. This is Large ribosomal subunit protein uL10 from Brucella suis (strain ATCC 23445 / NCTC 10510).